A 335-amino-acid chain; its full sequence is tRNA-dihydrouridine(20/20a) synthase (335 aa).

FMN-binding positions include proline 20–leucine 22 and glutamine 72. Cysteine 102 acts as the Proton donor in catalysis. FMN-binding positions include lysine 141, histidine 173, asparagine 213 to glycine 215, and glycine 235 to arginine 236.

The protein belongs to the Dus family. DusA subfamily. Requires FMN as cofactor.

The catalysed reaction is 5,6-dihydrouridine(20) in tRNA + NADP(+) = uridine(20) in tRNA + NADPH + H(+). It catalyses the reaction 5,6-dihydrouridine(20) in tRNA + NAD(+) = uridine(20) in tRNA + NADH + H(+). It carries out the reaction 5,6-dihydrouridine(20a) in tRNA + NADP(+) = uridine(20a) in tRNA + NADPH + H(+). The enzyme catalyses 5,6-dihydrouridine(20a) in tRNA + NAD(+) = uridine(20a) in tRNA + NADH + H(+). Catalyzes the synthesis of 5,6-dihydrouridine (D), a modified base found in the D-loop of most tRNAs, via the reduction of the C5-C6 double bond in target uridines. Specifically modifies U20 and U20a in tRNAs. This Shewanella oneidensis (strain ATCC 700550 / JCM 31522 / CIP 106686 / LMG 19005 / NCIMB 14063 / MR-1) protein is tRNA-dihydrouridine(20/20a) synthase.